Here is a 473-residue protein sequence, read N- to C-terminus: Pre-mRNA-splicing factor prp5 (473 aa).

WD repeat units follow at residues 161 to 191, 203 to 233, 245 to 275, 287 to 317, 329 to 358, 370 to 399, and 419 to 449; these read GHLG…KIWD, GHIA…KCWD, GHLS…RVWD, GHKS…RLWD, HHKK…KHWK, GHNA…CFWD, and DSEA…KIYK.

It belongs to the WD repeat PRL1/PRL2 family. As to quaternary structure, belongs to the 40S cdc5-associated complex (or cwf complex), a spliceosome sub-complex reminiscent of a late-stage spliceosome composed of the U2, U5 and U6 snRNAs and at least brr2, cdc5, cwf2/prp3, cwf3/syf1, cwf4/syf3, cwf5/ecm2, spp42/cwf6, cwf7/spf27, cwf8, cwf9, cwf10, cwf11, cwf12, prp45/cwf13, cwf14, cwf15, cwf16, cwf17, cwf18, cwf19, cwf20, cwf21, cwf22, cwf23, cwf24, cwf25, cwf26, cyp7/cwf27, cwf28, cwf29/ist3, lea1, msl1, prp5/cwf1, prp10, prp12/sap130, prp17, prp22, sap61, sap62, sap114, sap145, slu7, smb1, smd1, smd3, smf1, smg1 and syf2.

The protein localises to the nucleus. Required for both cell cycle progression at G2/M and pre-mRNA splicing. Interacts genetically with the PRP4 kinase. The protein is Pre-mRNA-splicing factor prp5 (prp5) of Schizosaccharomyces pombe (strain 972 / ATCC 24843) (Fission yeast).